Consider the following 245-residue polypeptide: 1-(5-phosphoribosyl)-5-[(5-phosphoribosylamino)methylideneamino] imidazole-4-carboxamide isomerase (245 aa).

The active-site Proton acceptor is the Asp-8. Catalysis depends on Asp-129, which acts as the Proton donor.

Belongs to the HisA/HisF family.

It is found in the cytoplasm. It catalyses the reaction 1-(5-phospho-beta-D-ribosyl)-5-[(5-phospho-beta-D-ribosylamino)methylideneamino]imidazole-4-carboxamide = 5-[(5-phospho-1-deoxy-D-ribulos-1-ylimino)methylamino]-1-(5-phospho-beta-D-ribosyl)imidazole-4-carboxamide. The protein operates within amino-acid biosynthesis; L-histidine biosynthesis; L-histidine from 5-phospho-alpha-D-ribose 1-diphosphate: step 4/9. The sequence is that of 1-(5-phosphoribosyl)-5-[(5-phosphoribosylamino)methylideneamino] imidazole-4-carboxamide isomerase from Trichlorobacter lovleyi (strain ATCC BAA-1151 / DSM 17278 / SZ) (Geobacter lovleyi).